A 975-amino-acid polypeptide reads, in one-letter code: Kinesin-like protein KIN-14K (975 aa).

Residues 1–40 are disordered; the sequence is MKNRIKKGSSMIGVYGRSDGSSSIQSSNGSESRESIDDNK. A compositionally biased stretch (low complexity) spans 17-30; that stretch reads RSDGSSSIQSSNGS. Positions 31-40 are enriched in basic and acidic residues; sequence ESRESIDDNK. Residues 40-143 form the Calponin-homology (CH) domain; it reads KQGHQSLVEW…SLKALKASFS (104 aa). A coiled-coil region spans residues 289–345; that stretch reads KERSNAELSKLKQELEIVKETHEKQFLELKLNAQKAKVELERQVKNSELRVVEAKEL. The Kinesin motor domain occupies 436-746; the sequence is NIRVYCRIRP…LKFAERVSGV (311 aa). 520–527 is an ATP binding site; that stretch reads GQTGSGKT. Positions 757–788 form a coiled coil; the sequence is GRDVRQLMEQVSNLKDMIAKKDEELQKFQNIN. Disordered stretches follow at residues 801–852 and 900–975; these read VSPP…GAKD and LFPE…NRKR. Residues 944–958 show a composition bias toward low complexity; that stretch reads LSISTTSSKALTSSK.

It belongs to the TRAFAC class myosin-kinesin ATPase superfamily. Kinesin family. KIN-14 subfamily.

The sequence is that of Kinesin-like protein KIN-14K from Arabidopsis thaliana (Mouse-ear cress).